Reading from the N-terminus, the 270-residue chain is MSLKKSPFFELRSGSVDTLLFIVKTADLDALRAELVKRFEATPEFFADDVVAIDVRRLADHERVPLDDIRGMLNDVRMRVIGVVAQPEQHAWAASAGLPLLEARDRRAPSSKAADEAPVQQAEPAAPAAGQAALFEQAGPTLADAGAPPESPAPAVAAQSATLVVDRPLHSGQQIYAKGDLVVLGPVSYGAEVIAEGNIHIYAPLRGRALAGVHGNHDARIFCTCLEPELISIAGIYRTTENPLPADVLGKSVQIRLEQEKLMIEPLRLT.

A disordered region spans residues 105-129 (DRRAPSSKAADEAPVQQAEPAAPAA). Positions 116–129 (EAPVQQAEPAAPAA) are enriched in low complexity.

It belongs to the MinC family. Interacts with MinD and FtsZ.

In terms of biological role, cell division inhibitor that blocks the formation of polar Z ring septums. Rapidly oscillates between the poles of the cell to destabilize FtsZ filaments that have formed before they mature into polar Z rings. Prevents FtsZ polymerization. In Burkholderia mallei (strain NCTC 10247), this protein is Probable septum site-determining protein MinC.